Here is a 406-residue protein sequence, read N- to C-terminus: Cysteine desulfurase (406 aa).

At Lys226 the chain carries N6-(pyridoxal phosphate)lysine. Cys364 functions as the Cysteine persulfide intermediate in the catalytic mechanism.

The protein belongs to the class-V pyridoxal-phosphate-dependent aminotransferase family. Csd subfamily. In terms of assembly, homodimer. Interacts with SufE and the SufBCD complex composed of SufB, SufC and SufD. The interaction with SufE is required to mediate the direct transfer of the sulfur atom from the S-sulfanylcysteine. Pyridoxal 5'-phosphate is required as a cofactor.

The protein localises to the cytoplasm. It catalyses the reaction (sulfur carrier)-H + L-cysteine = (sulfur carrier)-SH + L-alanine. The enzyme catalyses L-selenocysteine + AH2 = hydrogenselenide + L-alanine + A + H(+). The protein operates within cofactor biosynthesis; iron-sulfur cluster biosynthesis. In terms of biological role, cysteine desulfurases mobilize the sulfur from L-cysteine to yield L-alanine, an essential step in sulfur metabolism for biosynthesis of a variety of sulfur-containing biomolecules. Component of the suf operon, which is activated and required under specific conditions such as oxidative stress and iron limitation. Acts as a potent selenocysteine lyase in vitro, that mobilizes selenium from L-selenocysteine. Selenocysteine lyase activity is however unsure in vivo. The polypeptide is Cysteine desulfurase (Shigella sonnei (strain Ss046)).